Reading from the N-terminus, the 376-residue chain is 12-oxophytodienoate reductase 1 (376 aa).

FMN is bound by residues Pro35 to Thr37, Ala68, and Gln110. Residues Ser143 and His187–His190 each bind substrate. The Proton donor role is filled by Tyr192. FMN is bound at residue Arg239. Arg279 provides a ligand contact to substrate. Residues Gly309 and Gly330–Arg331 contribute to the FMN site.

This sequence belongs to the NADH:flavin oxidoreductase/NADH oxidase family. FMN is required as a cofactor. As to expression, constitutively expressed in roots, leaves, cotyledons, cells culture and to a lower extent in flowers.

The protein resides in the cytoplasm. It carries out the reaction (1S,2S)-OPC-8 + NADP(+) = (9S,13S,15Z)-12-oxophyto-10,15-dienoate + NADPH + H(+). It functions in the pathway lipid metabolism; oxylipin biosynthesis. Its function is as follows. Specifically cleaves olefinic bonds in alpha,beta-unsaturated carbonyls and may be involved in detoxification or modification of these reactive compounds. May be involved in the biosynthesis or metabolism of oxylipin signaling molecules. In vitro, reduces 9R,13R-12-oxophyodienoic acid (9R,13R-OPDA) to 9R,13R-OPC-8:0, but not 9S,13S-OPDA, the natural precursor of jasmonic acid. Also reduces N-ethylmaleimide and maleic acid. This Solanum lycopersicum (Tomato) protein is 12-oxophytodienoate reductase 1 (OPR1).